The sequence spans 303 residues: Phenoloxidase-activating factor 2 (303 aa).

Positions 1-24 (PDRRPPEDPITPPPPTKEEQRAGC) are disordered. Residues 36–292 (IIGDKDGEAK…LRDWIDDKVA (257 aa)) form the Peptidase S1 domain. Intrachain disulfides connect cysteine 173–cysteine 247, cysteine 206–cysteine 227, and cysteine 237–cysteine 268.

Belongs to the peptidase S1 family. In terms of assembly, heterodimer.

Its subcellular location is the secreted. Its function is as follows. Binds and activates processed prophenoloxidases PPO1 and PPO2 and thus is involved in the activation of the prophenoloxidase cascade probably following the recognition of pathogen-derived products. Binds the A.niger cell wall component alpha-1,3-glucan, a fungal pathogen-associated molecular pattern (PAMP) that activates the host immune response. The protein is Phenoloxidase-activating factor 2 (LOC113510063) of Galleria mellonella (Greater wax moth).